Consider the following 406-residue polypeptide: Imidazolonepropionase (406 aa).

Residues His74 and His76 each coordinate Fe(3+). Positions 74 and 76 each coordinate Zn(2+). Positions 83, 146, and 179 each coordinate 4-imidazolone-5-propanoate. Tyr146 contacts N-formimidoyl-L-glutamate. His240 serves as a coordination point for Fe(3+). His240 lines the Zn(2+) pocket. Glu243 is a binding site for 4-imidazolone-5-propanoate. Asp314 is a Fe(3+) binding site. Zn(2+) is bound at residue Asp314. N-formimidoyl-L-glutamate-binding residues include Asn316 and Gly318. Ser319 provides a ligand contact to 4-imidazolone-5-propanoate.

Belongs to the metallo-dependent hydrolases superfamily. HutI family. Zn(2+) is required as a cofactor. Requires Fe(3+) as cofactor.

The protein resides in the cytoplasm. It carries out the reaction 4-imidazolone-5-propanoate + H2O = N-formimidoyl-L-glutamate. The protein operates within amino-acid degradation; L-histidine degradation into L-glutamate; N-formimidoyl-L-glutamate from L-histidine: step 3/3. Catalyzes the hydrolytic cleavage of the carbon-nitrogen bond in imidazolone-5-propanoate to yield N-formimidoyl-L-glutamate. It is the third step in the universal histidine degradation pathway. The sequence is that of Imidazolonepropionase from Kosmotoga olearia (strain ATCC BAA-1733 / DSM 21960 / TBF 19.5.1).